A 339-amino-acid chain; its full sequence is Scoulerine-9-O-methyltransferase 3 (339 aa).

Methionine 161 is a binding site for S-adenosyl-L-methionine. A substrate-binding site is contributed by aspartate 164. Residues threonine 165, glycine 191, aspartate 214, 228–229 (DV), and lysine 242 contribute to the S-adenosyl-L-methionine site. 243 to 247 (SILHE) provides a ligand contact to substrate. Histidine 246 (proton acceptor) is an active-site residue.

Belongs to the class I-like SAM-binding methyltransferase superfamily. Cation-independent O-methyltransferase family. COMT subfamily. In terms of assembly, homodimer. Forms heterodimer with SOMT2. The heterodimer SOMT2-SOMT3 possesses 3-O-acetyl-4'-O-demethylpapaveroxine 4'-O-methyltransferase activity, where SOMT2 is the catalytic subunit. Highly expressed in capsules. Expressed is stems. Expressed at low levels in roots.

The enzyme catalyses (S)-scoulerine + S-adenosyl-L-methionine = (S)-tetrahydrocolumbamine + S-adenosyl-L-homocysteine + H(+). It functions in the pathway alkaloid biosynthesis. Functionally, methyltransferase involved in the biosynthesis of the benzylisoquinoline alkaloid noscapine. Catalyzes the conversion of (S)-scoulerine to (S)-tetrahydrocolumbamine. The polypeptide is Scoulerine-9-O-methyltransferase 3 (Papaver somniferum (Opium poppy)).